The sequence spans 89 residues: Small ribosomal subunit protein uS15 (89 aa).

It belongs to the universal ribosomal protein uS15 family. Part of the 30S ribosomal subunit. Forms a bridge to the 50S subunit in the 70S ribosome, contacting the 23S rRNA.

Its function is as follows. One of the primary rRNA binding proteins, it binds directly to 16S rRNA where it helps nucleate assembly of the platform of the 30S subunit by binding and bridging several RNA helices of the 16S rRNA. In terms of biological role, forms an intersubunit bridge (bridge B4) with the 23S rRNA of the 50S subunit in the ribosome. The polypeptide is Small ribosomal subunit protein uS15 (Pseudomonas putida (Arthrobacter siderocapsulatus)).